The following is a 466-amino-acid chain: 3-isopropylmalate dehydratase large subunit (466 aa).

Positions 345, 405, and 408 each coordinate [4Fe-4S] cluster.

It belongs to the aconitase/IPM isomerase family. LeuC type 1 subfamily. In terms of assembly, heterodimer of LeuC and LeuD. It depends on [4Fe-4S] cluster as a cofactor.

It carries out the reaction (2R,3S)-3-isopropylmalate = (2S)-2-isopropylmalate. It participates in amino-acid biosynthesis; L-leucine biosynthesis; L-leucine from 3-methyl-2-oxobutanoate: step 2/4. In terms of biological role, catalyzes the isomerization between 2-isopropylmalate and 3-isopropylmalate, via the formation of 2-isopropylmaleate. In Microcystis aeruginosa (strain NIES-843 / IAM M-2473), this protein is 3-isopropylmalate dehydratase large subunit.